Here is a 1427-residue protein sequence, read N- to C-terminus: Double-stranded DNA deaminase toxin A (1427 aa).

The next 2 membrane-spanning stretches (helical) occupy residues 16–36 and 43–63; these read ALAGFLVGAVLGIALIAAVAF and FGVALLAGMMAGIGAQALLSI. 4 YD repeats span residues 469–501, 548–584, 720–747, and 977–1008; these read RVVETHTSEGENWTFEYDVAGRQTRVRHADGRT, YDDAGRIIAETDPLGRTTRTRYDGNSLRPVEVVGPDG, NARGQLIEAVDPAGRRVQYRYDVEGRLR, and YDGAGDLIETSDSLRGSTRFSYDPAGRLISRA. The interval 1264–1427 is C-terminal effector domain, has cytidine deaminase activity; it reads IGLNGGANVY…SPKSPTKGGC (164 aa). Histidine 1345, cysteine 1373, and cysteine 1376 together coordinate Zn(2+). The interval 1402–1427 is disordered; that stretch reads KRGATGETKVFTGNSNSPKSPTKGGC. The span at 1412-1421 shows a compositional bias: polar residues; that stretch reads FTGNSNSPKS.

The protein belongs to the RHS/WapA nuclease family. The toxic domain forms a 1:1 complex with the DddI immunity protein.

Its subcellular location is the membrane. The enzyme catalyses a 2'-deoxycytidine in double-stranded DNA + H2O + H(+) = a 2'-deoxyuridine in double-stranded DNA + NH4(+). Functionally, toxic component of a toxin-immunity protein module, which functions as a cellular contact-dependent growth inhibition (CDI) system. CDI modules allow bacteria to communicate with and inhibit the growth of closely related neighboring bacteria in a contact-dependent fashion. Bacteria that have this module inhibit or kill bacteria without it, giving them a growth advantage. Probably specifically inhibited by cognate immunity protein DddI. The C-terminal 163 residue fragment has double-stranded DNA cytidine deaminase activity; it does not deaminate ssDNA, ssRNA or dsRNA. Leads to C:G to T:A conversions in deaminated DNA. Preferentially deaminates 5'-TC-3' substrates. The protein is Double-stranded DNA deaminase toxin A of Burkholderia cenocepacia (strain H111).